Reading from the N-terminus, the 410-residue chain is Lipid droplet-regulating VLDL assembly factor AUP1 (410 aa).

M1 bears the N-acetylmethionine mark. Residues 1–20 (MEPPPAPGPERLFDSHRLPS) are Cytoplasmic-facing. Residues 21–41 (DGFLLLALLLYAPVGLCLLVL) lie within the membrane without spanning it. Residues 42-410 (RLFLGLHVFL…FRERQAQEAE (369 aa)) are Cytoplasmic-facing. A disordered region spans residues 258 to 295 (RLTPADKAEHMKRQRHPRLRPQSVQSSFPSPPSPSSDV). At S292 the chain carries Phosphoserine. Residues 296-338 (QLTTLAHRVKEVLPHVPLNVIQRDLARTGCVDLTITNLLEGAV) form the CUE domain. The disordered stretch occupies residues 344–369 (DVTEGSQSPPAPSAPKFPSSGLATPQ). The residue at position 363 (S363) is a Phosphoserine. T367 is modified (phosphothreonine).

Belongs to the AUP1 family. Identified in a complex that contains SEL1L, OS9, FAF2/UBXD8, UBE2J1/UBC6E and AUP1. Interacts with the cytoplasmic tail of ITGA2B, ITGA1, ITGA2, ITGA5, ITGAV and ITGAM. Interacts (via C-terminus) with UBE2G2; the interaction recruits UBE2G2 to lipid droplets. Interacts with ubiquitin ligases AMFR/gp78 and RNF139/TRC8; this promotes interaction of UBE2G2 with AMFR and RNF139. Interacts with apolipoprotein APOB. Post-translationally, monoubiquitinated and diubiquitinated. Ubiquitous.

The protein localises to the endoplasmic reticulum membrane. Its subcellular location is the lipid droplet. Functionally, plays a role in the translocation of terminally misfolded proteins from the endoplasmic reticulum lumen to the cytoplasm and their degradation by the proteasome. Plays a role in lipid droplet formation. Induces lipid droplet clustering. Recruits ubiquitin-conjugating enzyme UBE2G2 to lipid droplets which facilitates its interaction with ubiquitin ligases AMFR/gp78 and RNF139/TRC8, leading to sterol-induced ubiquitination of HMGCR and its subsequent proteasomal degradation. Also required for the degradation of INSIG1, SREBF1 and SREBF2. Plays a role in regulating assembly and secretion of very low density lipoprotein particles and stability of apolipoprotein APOB. This chain is Lipid droplet-regulating VLDL assembly factor AUP1, found in Mus musculus (Mouse).